A 164-amino-acid polypeptide reads, in one-letter code: MTIAIYAGSFDPVTNGHIDVLKGALRLADQVIVAIGMHPGKKPLFSFDERVALIEASAKAVLHKDAARVSVIAFDGLVIDAARKHGAQLMVRGLRDGTDLDYEMQMAGMNGTMAPELQTVFLPADPAVRTITATLVRQIASMGGDIKPFVPVAVAAALNTKFKS.

Ser-9 is a substrate binding site. ATP is bound by residues 9–10 (SF) and His-17. Substrate is bound by residues Lys-41, Val-78, and Arg-92. Residues 93–95 (GLR), Glu-103, and 128–134 (VRTITAT) each bind ATP.

It belongs to the bacterial CoaD family. As to quaternary structure, homohexamer. Requires Mg(2+) as cofactor.

It is found in the cytoplasm. It catalyses the reaction (R)-4'-phosphopantetheine + ATP + H(+) = 3'-dephospho-CoA + diphosphate. It functions in the pathway cofactor biosynthesis; coenzyme A biosynthesis; CoA from (R)-pantothenate: step 4/5. In terms of biological role, reversibly transfers an adenylyl group from ATP to 4'-phosphopantetheine, yielding dephospho-CoA (dPCoA) and pyrophosphate. The chain is Phosphopantetheine adenylyltransferase from Brucella abortus (strain 2308).